We begin with the raw amino-acid sequence, 759 residues long: Rho GTPase-activating protein 26 (759 aa).

In terms of domain architecture, BAR spans 7-262 (EFSDCYLDSP…MKENPHEHLA (256 aa)). Residues 265-369 (PYTMEGYLYV…WMEAMDGREP (105 aa)) form the PH domain. The 186-residue stretch at 383–568 (AQLDNIGFSI…IIIENYEKMF (186 aa)) folds into the Rho-GAP domain. Residues 578–701 (NSQLHLSRKR…STSSDSSPVS (124 aa)) are disordered. A compositionally biased stretch (basic and acidic residues) spans 608–617 (HNTEKEEKRN). A compositionally biased stretch (low complexity) spans 618–637 (SVNSSAESVSSSNANSSANS). The span at 638-650 (TCTQCSNMNNLNA) shows a compositional bias: polar residues. Over residues 679-701 (PMFSAPSSPMPTSSTSSDSSPVS) the composition is skewed to low complexity. Residues 701-759 (SVPRKAKALYACKAEHDSELSFSAGTVFDNVYPSQEPGWLEGILNGKTGLIPENYVEFL) enclose the SH3 domain.

The protein localises to the cell junction. Its subcellular location is the focal adhesion. It localises to the cytoplasm. The protein resides in the cytoskeleton. It is found in the endosome membrane. GTPase-activating protein for rhoa and cdc42. The chain is Rho GTPase-activating protein 26 (arhgap26) from Xenopus tropicalis (Western clawed frog).